Reading from the N-terminus, the 325-residue chain is Glutarate 2-hydroxylase (325 aa).

Fe cation contacts are provided by histidine 160, aspartate 162, and histidine 292.

It belongs to the glutarate hydroxylase family. As to quaternary structure, homotetramer. Requires Fe(2+) as cofactor.

It catalyses the reaction glutarate + 2-oxoglutarate + O2 = (S)-2-hydroxyglutarate + succinate + CO2. The protein operates within amino-acid degradation. In terms of biological role, acts as an alpha-ketoglutarate-dependent dioxygenase catalyzing hydroxylation of glutarate (GA) to L-2-hydroxyglutarate (L2HG). Functions in a L-lysine degradation pathway that proceeds via cadaverine, glutarate and L-2-hydroxyglutarate. Is extremely specific for glutarate, but it can use both 2-oxoglutarate and 2-oxoadipate (2OA) as a cosubstrate for L2HG formation. This chain is Glutarate 2-hydroxylase, found in Pseudomonas putida (strain ATCC 47054 / DSM 6125 / CFBP 8728 / NCIMB 11950 / KT2440).